We begin with the raw amino-acid sequence, 128 residues long: uncharacterized protein (128 aa).

A disordered region spans residues 1 to 50 (MSNEQGKGMGFFGNKGKPASEKKDEKKTKLDLDYKPDLNPSTPYDPTLPV). A compositionally biased stretch (basic and acidic residues) spans 18–36 (PASEKKDEKKTKLDLDYKP).

This is an uncharacterized protein from Bacillus anthracis.